A 1020-amino-acid polypeptide reads, in one-letter code: Phosphatidylinositol 3-kinase VPS34 (1020 aa).

The region spanning 49–210 is the C2 PI3K-type domain; it reads LSTKFEDPTV…NWLDKMVLPK (162 aa). The PIK helical domain maps to 331–577; the sequence is DKELKPTPQL…DGPIKIYMDI (247 aa). The 339-residue stretch at 666 to 1004 folds into the PI3K/PI4K catalytic domain; it reads YPEESSVFKS…LINDSVNAFL (339 aa). The segment at 672–678 is G-loop; that stretch reads VFKSSLA. Residues 873 to 881 are catalytic loop; that stretch reads GVGDRHLDN. The tract at residues 892–913 is activation loop; it reads HADFGYILGRDPKPFPPLMKLP.

The protein belongs to the PI3/PI4-kinase family. In terms of assembly, component of the autophagy-specific VPS34 PI3-kinase complex I composed of at least VPS15, VPS30, VPS34, and of the VPS34 PI3-kinase complex II composed of VPS15, VPS30, VPS34 and VPS38. Interacts with VMNA7. In terms of processing, autophosphorylated.

The protein resides in the golgi apparatus. It is found in the trans-Golgi network membrane. It localises to the endosome membrane. It carries out the reaction a 1,2-diacyl-sn-glycero-3-phospho-(1D-myo-inositol) + ATP = a 1,2-diacyl-sn-glycero-3-phospho-(1D-myo-inositol-3-phosphate) + ADP + H(+). Its function is as follows. Multifunctional phosphatidylinositol 3-kinase involved in acidification of vacuoles, pH-dependent cell growth, and autophagocytosis. Plays an important role in protein transport and virulence. Component of the autophagy-specific VPS34 PI3-kinase complex I essential to recruit the ATG8-phosphatidylinositol conjugate and the ATG12-ATG5 conjugate to the pre-autophagosomal structure. Also involved in endosome-to-Golgi retrograde transport as part of the VPS34 PI3-kinase complex II. This second complex is required for the endosome-to-Golgi retrieval of PEP1 and KEX2, and the recruitment of VPS5 and VPS7, two components of the retromer complex, to endosomal membranes (probably through the synthesis of a specific pool of phosphatidylinositol 3-phosphate recruiting the retromer to the endosomes). Finally, it might also be involved in ethanol tolerance and cell wall integrity. This is Phosphatidylinositol 3-kinase VPS34 from Candida albicans (strain SC5314 / ATCC MYA-2876) (Yeast).